A 298-amino-acid polypeptide reads, in one-letter code: Urease accessory protein UreD (298 aa).

It belongs to the UreD family. UreD, UreF and UreG form a complex that acts as a GTP-hydrolysis-dependent molecular chaperone, activating the urease apoprotein by helping to assemble the nickel containing metallocenter of UreC. The UreE protein probably delivers the nickel.

The protein resides in the cytoplasm. Functionally, required for maturation of urease via the functional incorporation of the urease nickel metallocenter. This is Urease accessory protein UreD from Marinobacter nauticus (strain ATCC 700491 / DSM 11845 / VT8) (Marinobacter aquaeolei).